Reading from the N-terminus, the 611-residue chain is Conglutin beta 1 (611 aa).

A signal peptide spans 1–30 (MAKMRVRLPMLILLLGVVFLLAASIGIAYG). Basic and acidic residues-rich tracts occupy residues 32 to 82 (KDFT…RSQS) and 130 to 141 (SRREEREEREQE). Disordered stretches follow at residues 32-194 (KDFT…NRFQ) and 384-407 (LRKH…NLRS). The span at 142–151 (QGSSSGSQRG) shows a compositional bias: low complexity. The span at 152 to 181 (SGDERRQHRERRVHREEREQEQDSRSDSRR) shows a compositional bias: basic and acidic residues. The region spanning 186 to 344 (YHFSSNRFQT…TFNTRYEEIE (159 aa)) is the Cupin type-1 1 domain. Positions 390-402 (SSSGEGKPSESGP) are enriched in low complexity. A Cupin type-1 2 domain is found at 403 to 569 (FNLRSNKPIY…TFPGSIEDVE (167 aa)). An N-linked (GlcNAc...) asparagine glycan is attached at asparagine 434. The interval 476 to 495 (DQQRQQDEQEEEYEQGEEEV) is disordered. Over residues 483–492 (EQEEEYEQGE) the composition is skewed to acidic residues. Asparagine 519 carries an N-linked (GlcNAc...) asparagine glycan. A compositionally biased stretch (low complexity) spans 580-589 (FANAQPQQQQ). The tract at residues 580 to 600 (FANAQPQQQQQREKEGRRGRR) is disordered.

Belongs to the 7S seed storage protein family. As to quaternary structure, component of globulins complexes which accumulate in seeds.

Seed storage protein. Accumulates during seed development and is hydrolyzed after germination to provide a carbon and nitrogen source for the developing seedling. In Lupinus angustifolius (Narrow-leaved blue lupine), this protein is Conglutin beta 1.